Here is a 288-residue protein sequence, read N- to C-terminus: Inositol monophosphatase 2 (288 aa).

E81, D101, I103, and D104 together coordinate Mg(2+). E81 serves as a coordination point for substrate. Substrate-binding positions include 103-106, 205-207, Q224, and D231; these read IDGT and GSS. D231 is a Mg(2+) binding site.

The protein belongs to the inositol monophosphatase superfamily. Homodimer. Mg(2+) is required as a cofactor.

Its subcellular location is the cytoplasm. It carries out the reaction a myo-inositol phosphate + H2O = myo-inositol + phosphate. The catalysed reaction is 1D-myo-inositol 1-phosphate + H2O = myo-inositol + phosphate. It catalyses the reaction 1D-myo-inositol 2-phosphate + H2O = myo-inositol + phosphate. The enzyme catalyses 1D-myo-inositol 3-phosphate + H2O = myo-inositol + phosphate. It carries out the reaction 1D-myo-inositol 4-phosphate + H2O = myo-inositol + phosphate. The catalysed reaction is 1D-myo-inositol 5-phosphate + H2O = myo-inositol + phosphate. It catalyses the reaction 1D-myo-inositol 6-phosphate + H2O = myo-inositol + phosphate. The enzyme catalyses alpha-D-glucose 1-phosphate + H2O = D-glucose + phosphate. It carries out the reaction glycerol 2-phosphate + H2O = glycerol + phosphate. The catalysed reaction is adenosine 2'-phosphate + H2O = adenosine + phosphate. It functions in the pathway polyol metabolism; myo-inositol biosynthesis; myo-inositol from D-glucose 6-phosphate: step 2/2. With respect to regulation, inhibited by high Li(+) and restricted Mg(2+) concentrations. Phosphatase that can use myo-inositol monophosphates, myo-inositol 1,4-diphosphate, scyllo-inositol-1,4-diphosphate, glucose-1-phosphate, beta-glycerophosphate and 2'-AMP as substrates in vitro. It is likely that IMPA2 has an as yet unidentified in vivo substrate(s). Has been implicated as the pharmacological target for lithium (Li(+)) action in brain. In Homo sapiens (Human), this protein is Inositol monophosphatase 2.